A 296-amino-acid chain; its full sequence is GTPase Era (296 aa).

Residues 3-170 (KSGFITIVGR…LELMVKYLPE (168 aa)) enclose the Era-type G domain. The G1 stretch occupies residues 11–18 (GRPNVGKS). 11 to 18 (GRPNVGKS) contributes to the GTP binding site. The tract at residues 37 to 41 (QTTRN) is G2. Residues 58–61 (DTPG) are G3. GTP is bound by residues 58 to 62 (DTPGI) and 120 to 123 (NKVD). Residues 120 to 123 (NKVD) form a G4 region. The interval 149-151 (ISA) is G5. The KH type-2 domain maps to 201–278 (LSQEVPHGIA…NIKIWVKVRK (78 aa)).

Belongs to the TRAFAC class TrmE-Era-EngA-EngB-Septin-like GTPase superfamily. Era GTPase family. As to quaternary structure, monomer.

The protein resides in the cytoplasm. It is found in the cell membrane. Functionally, an essential GTPase that binds both GDP and GTP, with rapid nucleotide exchange. Plays a role in 16S rRNA processing and 30S ribosomal subunit biogenesis and possibly also in cell cycle regulation and energy metabolism. The sequence is that of GTPase Era from Clostridium perfringens (strain ATCC 13124 / DSM 756 / JCM 1290 / NCIMB 6125 / NCTC 8237 / Type A).